A 131-amino-acid chain; its full sequence is Large ribosomal subunit protein bL17 (131 aa).

It belongs to the bacterial ribosomal protein bL17 family. Part of the 50S ribosomal subunit. Contacts protein L32.

The sequence is that of Large ribosomal subunit protein bL17 from Chromobacterium violaceum (strain ATCC 12472 / DSM 30191 / JCM 1249 / CCUG 213 / NBRC 12614 / NCIMB 9131 / NCTC 9757 / MK).